Consider the following 485-residue polypeptide: Adenosylhomocysteinase 1 (485 aa).

Positions 64, 139, and 205 each coordinate substrate. 206-208 contacts NAD(+); the sequence is TTT. Positions 235 and 239 each coordinate substrate. NAD(+)-binding positions include 271–276, E292, 348–350, N397, H404, K479, 479–483, and Y483; these read GDVGKG, IGH, and KPPHY.

The protein belongs to the adenosylhomocysteinase family. As to quaternary structure, homotetramer. Requires NAD(+) as cofactor.

The catalysed reaction is S-adenosyl-L-homocysteine + H2O = L-homocysteine + adenosine. The protein operates within amino-acid biosynthesis; L-homocysteine biosynthesis; L-homocysteine from S-adenosyl-L-homocysteine: step 1/1. Its function is as follows. Essential protein during embryogenesis. Adenosylhomocysteine is a competitive inhibitor of S-adenosyl-L-methionine-dependent methyl transferase reactions; therefore adenosylhomocysteinase may play a key role in the control of methylations via regulation of the intracellular concentration of adenosylhomocysteine. Required for DNA methylation-dependent gene silencing. This is Adenosylhomocysteinase 1 from Arabidopsis thaliana (Mouse-ear cress).